A 60-amino-acid polypeptide reads, in one-letter code: Large ribosomal subunit protein bL32 (60 aa).

The disordered stretch occupies residues 1–44 (MAVQQNKKSRSARDMRRSHDALSENALSVEKTTGEVHLRHHVSP). A compositionally biased stretch (basic and acidic residues) spans 11 to 22 (SARDMRRSHDAL).

Belongs to the bacterial ribosomal protein bL32 family.

The sequence is that of Large ribosomal subunit protein bL32 from Pseudomonas putida (strain W619).